Here is a 1093-residue protein sequence, read N- to C-terminus: Probable phosphorylase b kinase regulatory subunit beta (1093 aa).

Positions 1–27 (MRDVPKSLGLSVTTPGGSSGAPDSGRH) are disordered. Calmodulin-binding regions lie at residues 6-27 (KSLGLSVTTPGGSSGAPDSGRH), 751-778 (QLYHRAGSLRYWRAVRYCSSLLHHIVDS), and 905-936 (EKLTTLQRRQLEGCLCRVPKHFYNKIWEILQR). The S-farnesyl cysteine moiety is linked to residue cysteine 1090.

This sequence belongs to the phosphorylase b kinase regulatory chain family. Post-translationally, although the final Cys may be farnesylated, the terminal tripeptide is probably not removed, and the C-terminus is not methylated.

The protein localises to the cell membrane. The protein operates within glycan biosynthesis; glycogen metabolism. Phosphorylase b kinase catalyzes the phosphorylation of serine in certain substrates, including troponin I. The beta chain acts as a regulatory unit and modulates the activity of the holoenzyme in response to phosphorylation. This Drosophila melanogaster (Fruit fly) protein is Probable phosphorylase b kinase regulatory subunit beta.